Consider the following 570-residue polypeptide: Developmental and secondary metabolism regulator veA (570 aa).

Disordered regions lie at residues 1–24 (MATR…ISRE), 39–60 (ERAR…VDPP), 266–491 (DMYA…LGSG), and 504–541 (KRSH…DYGR). In terms of domain architecture, Velvet spans 25–231 (GKKITYKLSV…AEQGCRVRIR (207 aa)). The Nuclear localization signal motif lies at 39 to 44 (ERARAC). Positions 278-287 (STSISTTADT) are enriched in polar residues. A compositionally biased stretch (low complexity) spans 315-335 (SMPAASAAPAPAPVHSPATSA). 3 stretches are compositionally biased toward polar residues: residues 336–354 (QTSS…SQYP), 363–395 (QSAT…TSSG), and 427–445 (NMQT…YPTL). The PEST stretch occupies residues 454–493 (PTPANHVTSLPPLKVLSGEYSHPSQPNAQSPHHDLGSGKR). Residues 505–526 (RSHEETFGSDERPLHNGMRPDM) are compositionally biased toward basic and acidic residues.

The protein belongs to the velvet family. VeA subfamily. In terms of assembly, component of the heterotrimeric velvet complex composed of laeA, veA and velB; VeA acting as a bridging protein between laeA and velB.

It is found in the nucleus. The protein localises to the cytoplasm. In terms of biological role, component of the velvet transcription factor complex that controls sexual/asexual developmental ratio in response to light, promoting sexual development in the darkness while stimulating asexual sporulation under illumination. The velvet complex hat acts as a global regulator for secondary metabolite gene expression. Controls the expression of hundreds of genes, including those comprising more than a dozen known secondary metabolite gene clusters. Controls the expression of the gliotoxin gene cluster. Controls the expression of the fumagillin, fumitremorgin G, fumigaclavine C and glionitrin gene clusters. The regulation of the fumagillin gene cluster and fumagillin production is performed through direct control of the expression of fumR. Negatively regulates conidiation. Required for normal protease activity. The polypeptide is Developmental and secondary metabolism regulator veA (Aspergillus fumigatus (strain ATCC MYA-4609 / CBS 101355 / FGSC A1100 / Af293) (Neosartorya fumigata)).